A 298-amino-acid polypeptide reads, in one-letter code: ADP/ATP translocase 1 (298 aa).

Over 1–7 (MSDQALS) the chain is Mitochondrial intermembrane. Serine 2 is subject to N-acetylserine. A Solcar 1 repeat occupies 6–98 (LSFLKDFLAG…FAFKDKYKQI (93 aa)). Serine 7 is subject to Phosphoserine. A helical membrane pass occupies residues 8–37 (FLKDFLAGGVAAAISKTAVAPIERVKLLLQ). The Mitochondrial matrix portion of the chain corresponds to 38-74 (VQHASKQISAEKQYKGIIDCVVRIPKEQGFLSFWRGN). N6,N6,N6-trimethyllysine is present on lysine 52. An N6-methyllysine modification is found at lysine 52. Residues 75–99 (LANVIRYFPTQALNFAFKDKYKQIF) form a helical membrane-spanning segment. Arginine 80 and lysine 92 together coordinate ADP. Topologically, residues 100 to 109 (LGGVDRHKQF) are mitochondrial intermembrane. A helical transmembrane segment spans residues 110 to 130 (WRYFAGNLASGGAAGATSLCF). 2 Solcar repeats span residues 111-201 (RYFA…AKGM) and 212-297 (VSWM…IKKF). The Mitochondrial matrix portion of the chain corresponds to 131–178 (VYPLDFARTRLAADVGKGAAQREFTGLGNCITKIFKSDGLRGLYQGFN). At lysine 147 the chain carries N6-succinyllysine. S-nitrosocysteine is present on cysteine 160. The helical transmembrane segment at 179–199 (VSVQGIIIYRAAYFGVYDTAK) threads the bilayer. The Mitochondrial intermembrane portion of the chain corresponds to 200–210 (GMLPDPKNVHI). Residues 211–231 (IVSWMIAQTVTAVAGLVSYPF) traverse the membrane as a helical segment. Over 232–273 (DTVRRRMMMQSGRKGADIMYTGTVDCWRKIAKDEGPKAFFKG) the chain is Mitochondrial matrix. Arginine 235 serves as a coordination point for ADP. The segment at 235 to 240 (RRRMMM) is important for transport activity. Residues 235-240 (RRRMMM) carry the Nucleotide carrier signature motif motif. Residues lysine 245 and lysine 272 each carry the N6-succinyllysine modification. The helical transmembrane segment at 274–291 (AWSNVLRGMGGAFVLVLY) threads the bilayer. The Mitochondrial intermembrane portion of the chain corresponds to 292–298 (DEIKKFV).

It belongs to the mitochondrial carrier (TC 2.A.29) family. As to quaternary structure, monomer. Found in a complex with ARL2, ARL2BP and SLC25A4/ANT1. Interacts with ARL2BP. Interacts with TIMM44; leading to inhibit the presequence translocase TIMM23, thereby promoting stabilization of PINK1. Under cell death induction, transglutaminated by TGM2. Transglutamination leads to formation of covalent cross-links between a glutamine and the epsilon-amino group of a lysine residue, forming polymers. In terms of tissue distribution, detected in heart muscle (at protein level). Detected in heart.

The protein resides in the mitochondrion inner membrane. Its subcellular location is the membrane. The enzyme catalyses ADP(in) + ATP(out) = ADP(out) + ATP(in). It carries out the reaction H(+)(in) = H(+)(out). Its activity is regulated as follows. The matrix-open state (m-state) is inhibited by the membrane-permeable bongkrekic acid (BKA). The cytoplasmic-open state (c-state) is inhibited by the membrane-impermeable toxic inhibitor carboxyatractyloside (CATR). Proton transporter activity is inhibited by ADP:ATP antiporter activity. Its function is as follows. ADP:ATP antiporter that mediates import of ADP into the mitochondrial matrix for ATP synthesis, and export of ATP out to fuel the cell. Cycles between the cytoplasmic-open state (c-state) and the matrix-open state (m-state): operates by the alternating access mechanism with a single substrate-binding site intermittently exposed to either the cytosolic (c-state) or matrix (m-state) side of the inner mitochondrial membrane. In addition to its ADP:ATP antiporter activity, also involved in mitochondrial uncoupling and mitochondrial permeability transition pore (mPTP) activity. Plays a role in mitochondrial uncoupling by acting as a proton transporter: proton transport uncouples the proton flows via the electron transport chain and ATP synthase to reduce the efficiency of ATP production and cause mitochondrial thermogenesis. Proton transporter activity is inhibited by ADP:ATP antiporter activity, suggesting that SLC25A4/ANT1 acts as a master regulator of mitochondrial energy output by maintaining a delicate balance between ATP production (ADP:ATP antiporter activity) and thermogenesis (proton transporter activity). Proton transporter activity requires free fatty acids as cofactor, but does not transport it. Probably mediates mitochondrial uncoupling in tissues that do not express UCP1. Also plays a key role in mPTP opening, a non-specific pore that enables free passage of the mitochondrial membranes to solutes of up to 1.5 kDa, and which contributes to cell death. It is however unclear if SLC25A4/ANT1 constitutes a pore-forming component of mPTP or regulates it. Acts as a regulator of mitophagy independently of ADP:ATP antiporter activity: promotes mitophagy via interaction with TIMM44, leading to inhibit the presequence translocase TIMM23, thereby promoting stabilization of PINK1. The polypeptide is ADP/ATP translocase 1 (Bos taurus (Bovine)).